Here is a 740-residue protein sequence, read N- to C-terminus: MASHLRPPSPLLVRVYKSGPRVRRKLESYFQSSKSSGGGECTVSTQEHEAPGTFRVEFSERAAKERVLKKGEHQILVDEKPVPIFLVPTENSIKKNTRPQISSLTQSQAETPSGDMHQHEGHIPNAVDSCLQKIFLTVTADLNCNLFSKEQRAYITTLCPSIRKMEGHDGIEKVCGDFQDIERIHQFLSEQFLESEQKQQFSPSMTERKPLSQQERDSCISPSEPETKAEQKSNYFEVPLPYFEYFKYICPDKINSIEKRFGVNIEIQESSPNMVCLDFTSSRSGDLEAARESFASEFQKNTEPLKQECVSLADSKQANKFKQELNHQFTKLLIKEKGGELTLLGTQDDISAAKQKISEAFVKIPVKLFAANYMMNVIEVDSAHYKLLETELLQEISEIEKRYDICSKVSEKGQKTCILFESKDRQVDLSVHAYASFIDAFQHASCQLMREVLLLKSLGKERKHLHQTKFADDFRKRHPNVHFVLNQESMTLTGLPNHLAKAKQYVLKGGGMSSLAGKKLKEGHETPMDIDSDDSKAASPPLKGSVSSEASELDKKEKGICVICMDTISNKKVLPKCKHEFCAPCINKAMSYKPICPTCQTSYGIQKGNQPEGSMVFTVSRDSLPGYESFGTIVITYSMKAGIQTEEHPNPGKRYPGIQRTAYLPDNKEGRKVLKLLYRAFDQKLIFTVGYSRVLGVSDVITWNDIHHKTSRFGGPEMYGYPDPSYLKRVKEELKAKGIE.

Ala2 bears the N-acetylalanine mark. Ser9 is subject to Phosphoserine. Disordered stretches follow at residues 96–119 (NTRP…MHQH), 195–231 (SEQK…KAEQ), and 524–551 (HETP…SEAS). 2 stretches are compositionally biased toward polar residues: residues 98 to 111 (RPQI…QAET) and 195 to 205 (SEQKQQFSPSM). Ser202 carries the phosphoserine modification. Basic and acidic residues predominate over residues 206–218 (TERKPLSQQERDS). 3 positions are modified to phosphoserine: Ser221, Ser532, and Ser539. The RING-type zinc-finger motif lies at 561–600 (CVICMDTISNKKVLPKCKHEFCAPCINKAMSYKPICPTCQ).

It belongs to the Deltex family. As to quaternary structure, homodimer and heterodimer. Can heterodimerize with DTX1, enhancing its ubiquitin ligase activity in vitro. Interacts (via N-terminus) with ADP ribosyltransferase PARP9/BAL1 (via PARP catalytic domain) forming a stable complex; the interaction is required to activate PARP9 but is dispensable for DTX3L catalytic activity. Forms a complex with STAT1 and PARP9 independently of IFNB1 or IFNG-mediated STAT1 'Tyr-701' phosphorylation. Found in a complex with PARP9, STAT1 and H2BC9. Found in a complex with E3 ligase ITCH and ESCRT-0 components HGS and STAM. Interacts (via C-terminus) with ITCH; the interaction is increased upon CXCL12 stimulation and inhibits ITCH catalytic activity; the interaction is direct. Interacts with HGS and STAM; the interaction brings together HGS and STAM and promotes their recruitment to early endosomes. (Microbial infection) Interacts with encephalomyocarditis virus (EMCV) C3 protease; the interaction results in C3 protease 'Lys-48'-linked ubiquitination. In terms of assembly, (Microbial infection) Interacts with human rhinovirus (HRV) C3 protease; the interaction results in C3 protease 'Lys-48'-linked ubiquitination. In terms of processing, autoubiquitinated.

Its subcellular location is the cytoplasm. It is found in the nucleus. The protein localises to the early endosome membrane. The protein resides in the lysosome membrane. It catalyses the reaction S-ubiquitinyl-[E2 ubiquitin-conjugating enzyme]-L-cysteine + [acceptor protein]-L-lysine = [E2 ubiquitin-conjugating enzyme]-L-cysteine + N(6)-ubiquitinyl-[acceptor protein]-L-lysine.. The protein operates within protein modification; protein ubiquitination. With respect to regulation, binding to PARP9 enhances DTX3L catalytic activity. E3 ubiquitin-protein ligase which, in association with ADP-ribosyltransferase PARP9, plays a role in DNA damage repair and in interferon-mediated antiviral responses. Monoubiquitinates several histones, including histone H2A, H2B, H3 and H4. In response to DNA damage, mediates monoubiquitination of 'Lys-91' of histone H4 (H4K91ub1). The exact role of H4K91ub1 in DNA damage response is still unclear but it may function as a licensing signal for additional histone H4 post-translational modifications such as H4 'Lys-20' methylation (H4K20me). PARP1-dependent PARP9-DTX3L-mediated ubiquitination promotes the rapid and specific recruitment of 53BP1/TP53BP1, UIMC1/RAP80, and BRCA1 to DNA damage sites. By monoubiquitinating histone H2B H2BC9/H2BJ and thereby promoting chromatin remodeling, positively regulates STAT1-dependent interferon-stimulated gene transcription and thus STAT1-mediated control of viral replication. Independently of its catalytic activity, promotes the sorting of chemokine receptor CXCR4 from early endosome to lysosome following CXCL12 stimulation by reducing E3 ligase ITCH activity and thus ITCH-mediated ubiquitination of endosomal sorting complex required for transport ESCRT-0 components HGS and STAM. In addition, required for the recruitment of HGS and STAM to early endosomes. In association with PARP9, plays a role in antiviral responses by mediating 'Lys-48'-linked ubiquitination of encephalomyocarditis virus (EMCV) and human rhinovirus (HRV) C3 proteases and thus promoting their proteasomal-mediated degradation. The protein is E3 ubiquitin-protein ligase DTX3L (DTX3L) of Homo sapiens (Human).